The following is a 285-amino-acid chain: Vesicle-associated membrane protein 725 (285 aa).

The Cytoplasmic portion of the chain corresponds to 1–261 (MDRSVVPISL…MWFENMKIKL (261 aa)). The region spanning 75–179 (FVARGTVILV…SLNREFGSKL (105 aa)) is the Longin domain. The v-SNARE coiled-coil homology domain maps to 195–255 (KLAKVKAQVT…TKIRRKMWFE (61 aa)). The chain crosses the membrane as a helical; Anchor for type IV membrane protein span at residues 262-282 (IVLGIIITLILIIILSVCGGF). Over 283–285 (KCT) the chain is Vesicular.

Belongs to the synaptobrevin family. As to expression, expressed in flowers, leaves, stems and roots.

Its subcellular location is the cell membrane. The protein localises to the early endosome membrane. In terms of biological role, involved in the targeting and/or fusion of transport vesicles to their target membrane. This is Vesicle-associated membrane protein 725 from Arabidopsis thaliana (Mouse-ear cress).